The chain runs to 271 residues: Transmembrane protein 33 homolog (271 aa).

Residues 1 to 32 (MVEIVEEPDDHQSSSTGAGSSGSSSAPPPPPP) are disordered. Residues 13–25 (SSSTGAGSSGSSS) show a composition bias toward low complexity. A run of 3 helical transmembrane segments spans residues 56–76 (VLTVFFALNYMIPFIGLVPAH), 125–145 (VVFLMAAPVSMAALPVTIYAA), and 180–200 (ALGIIACSEIFLVPLLVSLIF).

It belongs to the PER33/POM33 family.

The protein resides in the membrane. This Caenorhabditis elegans protein is Transmembrane protein 33 homolog.